Here is a 481-residue protein sequence, read N- to C-terminus: Proline--tRNA ligase (481 aa).

It belongs to the class-II aminoacyl-tRNA synthetase family. ProS type 3 subfamily. As to quaternary structure, homodimer.

It is found in the cytoplasm. It catalyses the reaction tRNA(Pro) + L-proline + ATP = L-prolyl-tRNA(Pro) + AMP + diphosphate. In terms of biological role, catalyzes the attachment of proline to tRNA(Pro) in a two-step reaction: proline is first activated by ATP to form Pro-AMP and then transferred to the acceptor end of tRNA(Pro). This Pelodictyon phaeoclathratiforme (strain DSM 5477 / BU-1) protein is Proline--tRNA ligase.